The chain runs to 378 residues: MAQKAPGVITCKAAVVWELGGPVVLEEIRVDPPKASEVRIKMLCASLCHTDVLCTKGFPIPLFPRIPGHEGVGVIESVGKDAKGLKPGDIVMPLYLGECGQCLNCKTGKTNLCHVYPPSFSGLMNDGTSRMSIARTGESIYHFASCSTWTEYAVADCNYVLKINPKISYPHASFLSCGFTTGFGATWRETQVSKGSSVAVFGIGTVGLGVIKGAQLQGASKIIGVDVNQYKAAKGKVFGMTDFINPKDHPDKSVSELVKELTHGLGVDHCFECTGVPSLLNEALEASKIGIGTVVPIGAGGEASVAINSLILFSGRTLKFTAFGGVRTQSDLPVIIDKCLNKEIQLDELLTHEIHLDNIQEAFEILKKPDCVKILIKF.

Cys48 is a Zn(2+) binding site. 49 to 53 provides a ligand contact to NAD(+); the sequence is HTDVL. Residues His69, Cys99, Cys102, Cys105, Cys113, and Cys177 each coordinate Zn(2+). Residues 202–207, Asp226, Lys231, 274–276, 297–299, and 321–323 contribute to the NAD(+) site; these read GIGTVG, TGV, IGA, and TAF.

The protein belongs to the zinc-containing alcohol dehydrogenase family. Class-IV subfamily. In terms of assembly, homodimer. Zn(2+) serves as cofactor. In terms of tissue distribution, present in non-glandular trichome cells.

It localises to the nucleus. Its subcellular location is the cytoplasm. The protein resides in the cytosol. The catalysed reaction is (+)-artemisinic alcohol + NAD(+) = (+)-artemisinic aldehyde + NADH + H(+). The protein operates within sesquiterpene biosynthesis. Involved in the biosynthesis of the antimalarial endoperoxide artemisinin. Catalyzes the conversion of artemisinic alcohol into artemisinic aldehyde. The sequence is that of Alcohol dehydrogenase 1 from Artemisia annua (Sweet wormwood).